The sequence spans 159 residues: Phosphopantetheine adenylyltransferase (159 aa).

Thr-10 contacts substrate. ATP is bound by residues 10–11 (TF) and His-18. The substrate site is built by Lys-42, Met-74, and Arg-88. Residues 89 to 91 (GLR), Glu-99, and 124 to 130 (WSFISSS) contribute to the ATP site.

This sequence belongs to the bacterial CoaD family. As to quaternary structure, homohexamer. The cofactor is Mg(2+).

The protein localises to the cytoplasm. It carries out the reaction (R)-4'-phosphopantetheine + ATP + H(+) = 3'-dephospho-CoA + diphosphate. It functions in the pathway cofactor biosynthesis; coenzyme A biosynthesis; CoA from (R)-pantothenate: step 4/5. In terms of biological role, reversibly transfers an adenylyl group from ATP to 4'-phosphopantetheine, yielding dephospho-CoA (dPCoA) and pyrophosphate. This chain is Phosphopantetheine adenylyltransferase, found in Yersinia pseudotuberculosis serotype I (strain IP32953).